The primary structure comprises 106 residues: UPF0145 protein Nmul_A0734 (106 aa).

This sequence belongs to the UPF0145 family.

This Nitrosospira multiformis (strain ATCC 25196 / NCIMB 11849 / C 71) protein is UPF0145 protein Nmul_A0734.